Consider the following 136-residue polypeptide: Phosphoribosyl-AMP cyclohydrolase (136 aa).

Residue Asp-92 participates in Mg(2+) binding. Cys-93 contributes to the Zn(2+) binding site. Mg(2+) is bound by residues Asp-94 and Asp-96. The Zn(2+) site is built by Cys-109 and Cys-116.

The protein belongs to the PRA-CH family. In terms of assembly, homodimer. The cofactor is Mg(2+). Zn(2+) is required as a cofactor.

It is found in the cytoplasm. The enzyme catalyses 1-(5-phospho-beta-D-ribosyl)-5'-AMP + H2O = 1-(5-phospho-beta-D-ribosyl)-5-[(5-phospho-beta-D-ribosylamino)methylideneamino]imidazole-4-carboxamide. It functions in the pathway amino-acid biosynthesis; L-histidine biosynthesis; L-histidine from 5-phospho-alpha-D-ribose 1-diphosphate: step 3/9. With respect to regulation, reversibly inhibited by EDTA and free zinc ions. Enzyme is inactivated by dialysis against 1,10-phenanthroline, which is a zinc specific chelator. In terms of biological role, catalyzes the hydrolysis of the adenine ring of phosphoribosyl-AMP. The sequence is that of Phosphoribosyl-AMP cyclohydrolase from Methanococcus vannielii.